We begin with the raw amino-acid sequence, 181 residues long: Adenine phosphoribosyltransferase (181 aa).

The protein belongs to the purine/pyrimidine phosphoribosyltransferase family. In terms of assembly, homodimer.

The protein resides in the cytoplasm. It catalyses the reaction AMP + diphosphate = 5-phospho-alpha-D-ribose 1-diphosphate + adenine. The protein operates within purine metabolism; AMP biosynthesis via salvage pathway; AMP from adenine: step 1/1. In terms of biological role, catalyzes a salvage reaction resulting in the formation of AMP, that is energically less costly than de novo synthesis. This chain is Adenine phosphoribosyltransferase, found in Vibrio vulnificus (strain CMCP6).